The primary structure comprises 262 residues: Rhomboid-type serine protease 2 (262 aa).

Residues 1–16 (MNWKSYVFPGGHPPAA) are Cytoplasmic-facing. A helical membrane pass occupies residues 17–37 (LTTGLVVFLTAIYLLSFIFAL). At 38 to 57 (REDLSLAPESLFKLQMSRLS) the chain is on the lumenal side. Residues 58-78 (LYPLIHLSLPHLLFNVLAIWA) form a helical membrane-spanning segment. The Cytoplasmic portion of the chain corresponds to 79–89 (PLNLFEETHGT). Residues 90-110 (VYTGVFLNLSALFAGILYCLL) traverse the membrane as a helical segment. At 111 to 112 (GK) the chain is on the lumenal side. Residues 113–133 (LLYPEALVAGASGWCFTLFAY) form a helical membrane-spanning segment. Ser124 (nucleophile) is an active-site residue. At 134–151 (YSFKESQIRPRTRIFRTD) the chain is on the cytoplasmic side. Residues 152 to 168 (YSIPTLYTPLVLLVAIA) form a helical membrane-spanning segment. The Lumenal portion of the chain corresponds to 169-174 (VVIPGS). Residues 175–191 (SFWGHFFGLCVGYAIGY) traverse the membrane as a helical segment. His179 is an active-site residue. Residues 192 to 262 (KESWFNKITP…DNSGTVLGTA (71 aa)) are Cytoplasmic-facing. The segment at 243 to 262 (STETPLPLHNDNSGTVLGTA) is disordered. The segment covering 252–262 (NDNSGTVLGTA) has biased composition (polar residues).

It belongs to the peptidase S54 family. Interacts with SNX3.

It localises to the golgi apparatus membrane. Its subcellular location is the golgi apparatus. The protein resides in the cis-Golgi network membrane. It catalyses the reaction Cleaves type-1 transmembrane domains using a catalytic dyad composed of serine and histidine that are contributed by different transmembrane domains.. In terms of biological role, probable rhomboid-type serine protease that catalyzes intramembrane proteolysis. The protein is Rhomboid-type serine protease 2 (RBD2) of Saccharomyces cerevisiae (strain ATCC 204508 / S288c) (Baker's yeast).